Here is an 810-residue protein sequence, read N- to C-terminus: E3 ubiquitin-protein ligase RNF10 (810 aa).

Residues 1-31 (MPQSSPSAAATASDMDKNSGSSSSSASSGSS) show a composition bias toward low complexity. The disordered stretch occupies residues 1–119 (MPQSSPSAAA…SFNGGRRDEV (119 aa)). The residue at position 5 (Ser-5) is a Phosphoserine. Polar residues predominate over residues 76-92 (NFINQSRRSNSQKSKTF). Residues 101–185 (GGSSKLFSSS…FNKELFLQAN (85 aa)) are interaction with MEOX2. The segment covering 104–113 (SKLFSSSFNG) has biased composition (low complexity). 2 positions are modified to phosphoserine: Ser-110 and Ser-128. Residues 225–267 (CPICLYPPTAAKITRCGHIFCWACILHYLSLSEKTWSKCPICY) form an RING-type zinc finger. Disordered regions lie at residues 598-623 (KRKR…EENK), 652-674 (DSAL…LSRS), 722-759 (ADVW…PVPS), and 775-810 (LDTP…VHTK). A compositionally biased stretch (basic and acidic residues) spans 607–623 (AREERRRERRIEMEENK). Over residues 652–661 (DSALGSTSTE) the composition is skewed to polar residues. Residues 662 to 674 (GRGALSLSPLSRS) show a composition bias toward low complexity. A compositionally biased stretch (basic and acidic residues) spans 722 to 735 (ADVWPKTAPKKDEN). Residues 801–810 (LFSTSVVHTK) show a composition bias toward polar residues.

Belongs to the RNF10 family. Interacts with MEOX2.

It is found in the cytoplasm. The protein localises to the nucleus. It carries out the reaction S-ubiquitinyl-[E2 ubiquitin-conjugating enzyme]-L-cysteine + [acceptor protein]-L-lysine = [E2 ubiquitin-conjugating enzyme]-L-cysteine + N(6)-ubiquitinyl-[acceptor protein]-L-lysine.. The protein operates within protein modification; protein ubiquitination. In terms of biological role, E3 ubiquitin-protein ligase that catalyzes monoubiquitination of 40S ribosomal proteins RPS2/us5 and RPS3/us3 in response to ribosome stalling. Part of a ribosome quality control that takes place when ribosomes have stalled during translation initiation (iRQC): RNF10 acts by mediating monoubiquitination of RPS2/us5 and RPS3/us3, promoting their degradation by the proteasome. Also promotes ubiquitination of 40S ribosomal proteins in response to ribosome stalling during translation elongation. The action of RNF10 in iRQC is counteracted by USP10. May also act as a transcriptional factor involved in the regulation of MAG (Myelin-associated glycoprotein) expression. Acts as a regulator of Schwann cell differentiation and myelination. The polypeptide is E3 ubiquitin-protein ligase RNF10 (RNF10) (Bos taurus (Bovine)).